A 393-amino-acid chain; its full sequence is Envelope glycoprotein D (393 aa).

An N-terminal signal peptide occupies residues 1–25 (MGRLTSGVGTAALLVVAVGLRVVCA). The interaction with TNFRSF14 stretch occupies residues 25–57 (AKYALADPSLKMADPNRFRGKNLPVLDQLTDPP). Topologically, residues 26 to 340 (KYALADPSLK…HAPAAPSNPG (315 aa)) are virion surface. His64 contributes to the Zn(2+) binding site. 3 cysteine pairs are disulfide-bonded: Cys91–Cys214, Cys131–Cys227, and Cys143–Cys152. 2 N-linked (GlcNAc...) asparagine; by host glycosylation sites follow: Asn119 and Asn146. Asp240 lines the Zn(2+) pocket. The tract at residues 261 to 305 (LKIAGWHGPKPPYTSTLLPPELSDTTNATQPELVPEDPEDSALLE) is profusion. The span at 274-290 (TSTLLPPELSDTTNATQ) shows a compositional bias: polar residues. Positions 274–301 (TSTLLPPELSDTTNATQPELVPEDPEDS) are disordered. N-linked (GlcNAc...) asparagine; by host glycosylation occurs at Asn287. The helical transmembrane segment at 341-361 (LIIGALAGSTLAVLVIGGIAF) threads the bilayer. Residues 362–393 (WVRRRAQMAPKRLRLPHIRDDDAPPSHQPLFY) lie on the Intravirion side of the membrane.

Belongs to the herpesviridae glycoprotein D family. As to quaternary structure, homodimer. Interacts with host receptor TNFRSF14. Interacts with host receptor NECTIN1. Interacts with host receptor NECTIN2. Interacts (via profusion domain) with gB; this interaction occurs in the absence of gH/gL. Interacts (via profusion domain) with gH/gL heterodimer; this interaction occurs in the absence of gB. Associates with the gB-gH/gL-gD complex. Interacts (via C-terminus) with UL11 tegument protein.

Its subcellular location is the virion membrane. Functionally, envelope glycoprotein that binds to the host cell entry receptors NECTIN1 and TNFRSF14/HVEM, promoting the virus entry into host cells. May trigger fusion with host membrane, by recruiting the fusion machinery composed of gB and gH/gL. The chain is Envelope glycoprotein D (gD) from Human herpesvirus 2 (strain HG52) (HHV-2).